An 88-amino-acid chain; its full sequence is Small ribosomal subunit protein bS20 (88 aa).

Belongs to the bacterial ribosomal protein bS20 family.

Binds directly to 16S ribosomal RNA. This Clostridium acetobutylicum (strain ATCC 824 / DSM 792 / JCM 1419 / IAM 19013 / LMG 5710 / NBRC 13948 / NRRL B-527 / VKM B-1787 / 2291 / W) protein is Small ribosomal subunit protein bS20.